A 276-amino-acid chain; its full sequence is UPF0276 protein PA4106 (276 aa).

Belongs to the UPF0276 family.

This is UPF0276 protein PA4106 from Pseudomonas aeruginosa (strain ATCC 15692 / DSM 22644 / CIP 104116 / JCM 14847 / LMG 12228 / 1C / PRS 101 / PAO1).